The following is a 475-amino-acid chain: MNYEAIIGLEVHCELLTKTKAFCGCSTEFGAKPNTHVCPICLGLPGALPKLNKKVVEYGMKAGIALNCSINKLCRMDRKNYYYVDCPKNYQITQSEYPLCKDGYIEISLENGEAKKISIERIHIEEDAGKLIHNSQGTFVDFNRAGVPLIEIVSNPDMRNSKEAVEYLIHLRSVLKAIGVSDCKMEEGSLRCDANISVREKGNKEFGVKCEIKNMNSFKALEKALNYEFERQIEVLKNGGKVIQETRRWDEENNKTVVMRSKEDANDYRYFPDGDLVSINISDNWIEEIKESIGELPHEKEKRFIEQYEIPKYDTKIITSSLEMAEFFEEATKISKNAKAVSNWLMGDISRLLNKNNIKIEEIKFSPKDLGEFIKLIDKKIISNSIGKDLIEEMFLTGKSPKDIVEEKGLVQNNNKEEILEIVKKVLHDNPENVTSYKNGKTKLLGYFVGQVMKITKGKANPKIVNEIILKELNM.

The protein belongs to the GatB/GatE family. GatB subfamily. As to quaternary structure, heterotrimer of A, B and C subunits.

It carries out the reaction L-glutamyl-tRNA(Gln) + L-glutamine + ATP + H2O = L-glutaminyl-tRNA(Gln) + L-glutamate + ADP + phosphate + H(+). The catalysed reaction is L-aspartyl-tRNA(Asn) + L-glutamine + ATP + H2O = L-asparaginyl-tRNA(Asn) + L-glutamate + ADP + phosphate + 2 H(+). Allows the formation of correctly charged Asn-tRNA(Asn) or Gln-tRNA(Gln) through the transamidation of misacylated Asp-tRNA(Asn) or Glu-tRNA(Gln) in organisms which lack either or both of asparaginyl-tRNA or glutaminyl-tRNA synthetases. The reaction takes place in the presence of glutamine and ATP through an activated phospho-Asp-tRNA(Asn) or phospho-Glu-tRNA(Gln). The protein is Aspartyl/glutamyl-tRNA(Asn/Gln) amidotransferase subunit B of Clostridium novyi (strain NT).